A 285-amino-acid chain; its full sequence is Pantothenate synthetase (285 aa).

30-37 is an ATP binding site; the sequence is MGYLHAGH. His-37 serves as the catalytic Proton donor. Gln-61 provides a ligand contact to (R)-pantoate. Gln-61 is a beta-alanine binding site. 147-150 lines the ATP pocket; that stretch reads GQKD. (R)-pantoate is bound at residue Gln-153. ATP-binding positions include Val-176 and 184-187; that span reads LSSR.

Belongs to the pantothenate synthetase family. In terms of assembly, homodimer.

The protein resides in the cytoplasm. The enzyme catalyses (R)-pantoate + beta-alanine + ATP = (R)-pantothenate + AMP + diphosphate + H(+). Its pathway is cofactor biosynthesis; (R)-pantothenate biosynthesis; (R)-pantothenate from (R)-pantoate and beta-alanine: step 1/1. In terms of biological role, catalyzes the condensation of pantoate with beta-alanine in an ATP-dependent reaction via a pantoyl-adenylate intermediate. The chain is Pantothenate synthetase from Solidesulfovibrio magneticus (strain ATCC 700980 / DSM 13731 / RS-1) (Desulfovibrio magneticus).